The following is a 282-amino-acid chain: Chlorite dismutase (282 aa).

The signal sequence occupies residues 1–31; that stretch reads MTNLSIHNFKLSLVAAVIGSAMVMTSSPVAA. Residue E104 participates in Ca(2+) binding. Residue H204 coordinates heme. Residue R217 is the Proton acceptor of the active site. Ca(2+)-binding residues include D226 and T265.

Belongs to the chlorite dismutase family. In terms of assembly, homopentamer. Heme b serves as cofactor.

It is found in the periplasm. It catalyses the reaction chloride + O2 = chlorite. Functionally, catalyzes the heme-dependent decomposition of chlorite to O(2) and chloride with high efficiency and specificity. Used to detoxify chlorite, a by-product of the reduction of perchlorate, a primarily anthropogenic pollutant, in perchlorate-respiring bacteria. This is Chlorite dismutase from Dechloromonas aromatica (strain RCB).